Reading from the N-terminus, the 558-residue chain is Suppressor of zyg-1 protein 20 (558 aa).

Positions 45–146 (KVKAEESSGV…ARNRILGTEY (102 aa)) constitute an SUZ domain. Disordered regions lie at residues 50 to 132 (ESSG…ERQA), 205 to 241 (FTQPPPSVSESGGVYNGPPGFQQKQPNFQPTLQQQSL), and 374 to 558 (QRNQ…NRPQ). Residues 69–81 (EEPKRVFLRRPKD) show a composition bias toward basic and acidic residues. Polar residues predominate over residues 94 to 109 (PPTSADTEEQPVTNVR). The segment covering 117-131 (NQKEKQPAPTYEERQ) has biased composition (basic and acidic residues). 2 stretches are compositionally biased toward low complexity: residues 374 to 394 (QRNQVNSYPQQNGAGRGQNRQ) and 424 to 477 (NNGQ…QQQQ). Polar residues-rich tracts occupy residues 478-508 (NKSGKFGQNRNDMQKNNYQPNLQQPPMSQNP) and 545-558 (SASQWPALQQNRPQ).

As to quaternary structure, interacts (via C-terminus) with atx-2 (via C-terminus); the interaction is RNA independent. Interacts with let-92. Post-translationally, phosphorylated. May be dephosphorylated by let-92.

It is found in the cytoplasm. The protein localises to the cytoskeleton. It localises to the microtubule organizing center. Its subcellular location is the centrosome. The protein resides in the centriole. It is found in the nucleus. The protein localises to the nucleolus. It localises to the chromosome. RNA binding protein that is required for normal cell division and cytokinesis during embryonic development. Functions with RNA-binding protein atx-2 to ensure embryonic cell division, and to this end, plays a role in the regulation of centrosome assembly, position and size, and in astral microtubule outgrowth and nucleation. Furthermore, negatively regulates the levels of the protein kinase zyg-1 at the centrosome. Also involved in ensuring centrosome attachment to the nuclear envelope. The polypeptide is Suppressor of zyg-1 protein 20 (Caenorhabditis elegans).